The following is a 42-amino-acid chain: Photosystem I reaction center subunit IX (42 aa).

A helical transmembrane segment spans residues 7–27 (YLSVAPVLSTLWFGSLAGLLI).

This sequence belongs to the PsaJ family.

It is found in the plastid. Its subcellular location is the chloroplast thylakoid membrane. May help in the organization of the PsaE and PsaF subunits. The polypeptide is Photosystem I reaction center subunit IX (Lepidium virginicum (Virginia pepperweed)).